The sequence spans 274 residues: NAD kinase (274 aa).

Asp59 (proton acceptor) is an active-site residue. NAD(+) is bound by residues 59–60, Lys64, 128–129, Asp158, 169–174, and Ala193; these read DG, ND, and TAYALS.

The protein belongs to the NAD kinase family. A divalent metal cation serves as cofactor.

The protein localises to the cytoplasm. It catalyses the reaction NAD(+) + ATP = ADP + NADP(+) + H(+). In terms of biological role, involved in the regulation of the intracellular balance of NAD and NADP, and is a key enzyme in the biosynthesis of NADP. Catalyzes specifically the phosphorylation on 2'-hydroxyl of the adenosine moiety of NAD to yield NADP. This Petrotoga mobilis (strain DSM 10674 / SJ95) protein is NAD kinase.